Here is a 372-residue protein sequence, read N- to C-terminus: Isoliquiritigenin 2'-O-methyltransferase (372 aa).

S-adenosyl-L-methionine is bound by residues G217, D240, D260, M261, and K274. The active-site Proton acceptor is the H278.

It belongs to the class I-like SAM-binding methyltransferase superfamily. Cation-independent O-methyltransferase family. COMT subfamily. In terms of assembly, monomer. Homodimer. Roots (at protein level). Expressed mainly in roots, and to a lesser extent in root nodules. In the roots, expression is not detected in the root tip or the cells immediately behind the tip, but is detected in tissues starting 1.5-2.0 mm distal to the root tip. Detected in the epidermal and cortical cells of 2 day old roots, with lower levels in vascular tissue.

The catalysed reaction is isoliquiritigenin + S-adenosyl-L-methionine = 2'-O-methylisoliquiritigenin + S-adenosyl-L-homocysteine + H(+). The enzyme catalyses licodione + S-adenosyl-L-methionine = 2'-O-methyllicodione + S-adenosyl-L-homocysteine + H(+). Inhibited by 1 mM Co(2+), Cu(2+), Zn(2+) or Fe(2+). Non-competitively inhibited by S-adenosyl-L-homocysteine. Competitively inhibited by 2'-O-methylisoliquiritigenin. Its function is as follows. Methylates the 2'-hydroxyl of isoliquiritigenin and licodione. Does not methylate narigenin chalcone, caffeic acid or daidzein. Involved in the root nodulation initiation by promoting the biosynthesis of nod-inducing molecules. This Medicago sativa (Alfalfa) protein is Isoliquiritigenin 2'-O-methyltransferase.